The chain runs to 718 residues: Ribosomal RNA large subunit methyltransferase K/L (718 aa).

Residues 44–155 (DAYKVCIYSH…KQYVNVFLCL (112 aa)) enclose the THUMP domain.

The protein belongs to the methyltransferase superfamily. RlmKL family.

It localises to the cytoplasm. The catalysed reaction is guanosine(2445) in 23S rRNA + S-adenosyl-L-methionine = N(2)-methylguanosine(2445) in 23S rRNA + S-adenosyl-L-homocysteine + H(+). It catalyses the reaction guanosine(2069) in 23S rRNA + S-adenosyl-L-methionine = N(2)-methylguanosine(2069) in 23S rRNA + S-adenosyl-L-homocysteine + H(+). In terms of biological role, specifically methylates the guanine in position 2445 (m2G2445) and the guanine in position 2069 (m7G2069) of 23S rRNA. This Francisella philomiragia subsp. philomiragia (strain ATCC 25017 / CCUG 19701 / FSC 153 / O#319-036) protein is Ribosomal RNA large subunit methyltransferase K/L.